Consider the following 383-residue polypeptide: Homoserine O-succinyltransferase (383 aa).

The region spanning Asn51–Leu360 is the AB hydrolase-1 domain. Ser157 functions as the Nucleophile in the catalytic mechanism. Arg227 serves as a coordination point for substrate. Catalysis depends on residues Asp323 and His356. Asp357 contributes to the substrate binding site.

Belongs to the AB hydrolase superfamily. MetX family. As to quaternary structure, homodimer.

The protein resides in the cytoplasm. It catalyses the reaction L-homoserine + succinyl-CoA = O-succinyl-L-homoserine + CoA. It functions in the pathway amino-acid biosynthesis; L-methionine biosynthesis via de novo pathway; O-succinyl-L-homoserine from L-homoserine: step 1/1. Its function is as follows. Transfers a succinyl group from succinyl-CoA to L-homoserine, forming succinyl-L-homoserine. This chain is Homoserine O-succinyltransferase, found in Acidithiobacillus ferrooxidans (strain ATCC 23270 / DSM 14882 / CIP 104768 / NCIMB 8455) (Ferrobacillus ferrooxidans (strain ATCC 23270)).